A 154-amino-acid polypeptide reads, in one-letter code: Cyanate hydratase (154 aa).

Catalysis depends on residues Arg100, Glu103, and Ser126.

This sequence belongs to the cyanase family.

The enzyme catalyses cyanate + hydrogencarbonate + 3 H(+) = NH4(+) + 2 CO2. In terms of biological role, catalyzes the reaction of cyanate with bicarbonate to produce ammonia and carbon dioxide. The protein is Cyanate hydratase of Aspergillus clavatus (strain ATCC 1007 / CBS 513.65 / DSM 816 / NCTC 3887 / NRRL 1 / QM 1276 / 107).